The sequence spans 420 residues: Histidine--tRNA ligase (420 aa).

This sequence belongs to the class-II aminoacyl-tRNA synthetase family. In terms of assembly, homodimer.

Its subcellular location is the cytoplasm. The catalysed reaction is tRNA(His) + L-histidine + ATP = L-histidyl-tRNA(His) + AMP + diphosphate + H(+). The sequence is that of Histidine--tRNA ligase from Thermotoga petrophila (strain ATCC BAA-488 / DSM 13995 / JCM 10881 / RKU-1).